A 638-amino-acid polypeptide reads, in one-letter code: DNA mismatch repair protein MutL (638 aa).

The tract at residues 404 to 433 is disordered; that stretch reads FGTQTNAFGSMATPRDNSRGNYSAGESRQR.

Belongs to the DNA mismatch repair MutL/HexB family.

Its function is as follows. This protein is involved in the repair of mismatches in DNA. It is required for dam-dependent methyl-directed DNA mismatch repair. May act as a 'molecular matchmaker', a protein that promotes the formation of a stable complex between two or more DNA-binding proteins in an ATP-dependent manner without itself being part of a final effector complex. The polypeptide is DNA mismatch repair protein MutL (Shewanella baltica (strain OS195)).